Here is a 125-residue protein sequence, read N- to C-terminus: UPF0251 protein Dhaf_1981 (125 aa).

It belongs to the UPF0251 family.

The sequence is that of UPF0251 protein Dhaf_1981 from Desulfitobacterium hafniense (strain DSM 10664 / DCB-2).